The primary structure comprises 319 residues: Protease HtpX homolog (319 aa).

The next 2 membrane-spanning stretches (helical) occupy residues 3–23 (LTVL…AWAL) and 32–52 (TGVA…QWLF). Zn(2+) is bound at residue His134. The active site involves Glu135. His138 is a binding site for Zn(2+). The next 2 helical transmembrane spans lie at 146-166 (VILA…TLVW) and 182-202 (MALV…QLIV). Glu210 is a binding site for Zn(2+).

The protein belongs to the peptidase M48B family. Zn(2+) serves as cofactor.

The protein localises to the cell membrane. This Aeropyrum pernix (strain ATCC 700893 / DSM 11879 / JCM 9820 / NBRC 100138 / K1) protein is Protease HtpX homolog.